The chain runs to 403 residues: Fasciclin-like arabinogalactan protein 2 (403 aa).

Positions 1–26 (MAYLRRAATALVLIFQLHLFLSLSNA) are cleaved as a signal peptide. 2 consecutive FAS1 domains span residues 27 to 174 (HNIT…SQVL) and 187 to 326 (SDLI…DKVL). 4 N-linked (GlcNAc...) asparagine glycosylation sites follow: N28, N130, N164, and N248. Residues 338 to 371 (SAPAPKSSKKKPKNAEADADGPSADAPSDDDVEV) form a disordered region. Residue A378 is the site of GPI-anchor amidated alanine attachment. Positions 379 to 403 (VSAMITRTSNVVTAIVGLCFGVWLM) are cleaved as a propeptide — removed in mature form.

This sequence belongs to the fasciclin-like AGP family. Expressed mainly in flowers and to a lesser extent in leaves and roots.

The protein localises to the cell membrane. Its function is as follows. May be a cell surface adhesion protein. The polypeptide is Fasciclin-like arabinogalactan protein 2 (FLA2) (Arabidopsis thaliana (Mouse-ear cress)).